Here is a 225-residue protein sequence, read N- to C-terminus: Enolase-phosphatase E1 (225 aa).

The protein belongs to the HAD-like hydrolase superfamily. MasA/MtnC family. As to quaternary structure, monomer. The cofactor is Mg(2+).

The catalysed reaction is 5-methylsulfanyl-2,3-dioxopentyl phosphate + H2O = 1,2-dihydroxy-5-(methylsulfanyl)pent-1-en-3-one + phosphate. It functions in the pathway amino-acid biosynthesis; L-methionine biosynthesis via salvage pathway; L-methionine from S-methyl-5-thio-alpha-D-ribose 1-phosphate: step 3/6. Its pathway is amino-acid biosynthesis; L-methionine biosynthesis via salvage pathway; L-methionine from S-methyl-5-thio-alpha-D-ribose 1-phosphate: step 4/6. Bifunctional enzyme that catalyzes the enolization of 2,3-diketo-5-methylthiopentyl-1-phosphate (DK-MTP-1-P) into the intermediate 2-hydroxy-3-keto-5-methylthiopentenyl-1-phosphate (HK-MTPenyl-1-P), which is then dephosphorylated to form the acireductone 1,2-dihydroxy-3-keto-5-methylthiopentene (DHK-MTPene). The protein is Enolase-phosphatase E1 of Pseudomonas aeruginosa (strain UCBPP-PA14).